Here is a 303-residue protein sequence, read N- to C-terminus: Serine/threonine-protein phosphatase 6 catalytic subunit (303 aa).

The Mn(2+) site is built by Asp51, His53, Asp79, and Asn111. Residue His112 is the Proton donor of the active site. Mn(2+) contacts are provided by His161 and His235.

The protein belongs to the PPP phosphatase family. PP-6 (PP-V) subfamily. It depends on Mn(2+) as a cofactor.

It is found in the cytoplasm. It catalyses the reaction O-phospho-L-seryl-[protein] + H2O = L-seryl-[protein] + phosphate. It carries out the reaction O-phospho-L-threonyl-[protein] + H2O = L-threonyl-[protein] + phosphate. May be involved in controlling cellularization or in regulating transcription of the genes involved in this process. In Drosophila melanogaster (Fruit fly), this protein is Serine/threonine-protein phosphatase 6 catalytic subunit (PpV).